We begin with the raw amino-acid sequence, 426 residues long: UDP-N-acetylglucosamine 1-carboxyvinyltransferase (426 aa).

22-23 provides a ligand contact to phosphoenolpyruvate; that stretch reads KN. R94 is a UDP-N-acetyl-alpha-D-glucosamine binding site. The active-site Proton donor is C118. The residue at position 118 (C118) is a 2-(S-cysteinyl)pyruvic acid O-phosphothioketal. UDP-N-acetyl-alpha-D-glucosamine contacts are provided by residues 123–127, D310, and I332; that span reads RPVDL.

Belongs to the EPSP synthase family. MurA subfamily.

The protein localises to the cytoplasm. It carries out the reaction phosphoenolpyruvate + UDP-N-acetyl-alpha-D-glucosamine = UDP-N-acetyl-3-O-(1-carboxyvinyl)-alpha-D-glucosamine + phosphate. The protein operates within cell wall biogenesis; peptidoglycan biosynthesis. Functionally, cell wall formation. Adds enolpyruvyl to UDP-N-acetylglucosamine. In Hyphomonas neptunium (strain ATCC 15444), this protein is UDP-N-acetylglucosamine 1-carboxyvinyltransferase.